We begin with the raw amino-acid sequence, 553 residues long: Putative transport protein YidE (553 aa).

A run of 5 helical transmembrane segments spans residues 4 to 24, 28 to 48, 65 to 85, 95 to 115, and 158 to 178; these read IALT…IGNV, GIGL…HFVS, FGLI…FFAS, LFAV…HKLF, and MSYA…MWML. RCK C-terminal domains follow at residues 191–276 and 279–361; these read QQHE…VIGQ and DTSL…VLGN. 6 helical membrane passes run 371-391, 393-413, 439-459, 464-484, 493-513, and 533-553; these read MLPV…PVFV, GFPA…ALIL, IVLF…NTLV, LSWI…VGIL, YLTM…LAFA, and LVMF…WSIG.

It belongs to the AAE transporter (TC 2.A.81) family. YidE subfamily.

The protein localises to the cell membrane. This Escherichia coli (strain ATCC 8739 / DSM 1576 / NBRC 3972 / NCIMB 8545 / WDCM 00012 / Crooks) protein is Putative transport protein YidE.